A 153-amino-acid polypeptide reads, in one-letter code: NADPH-dependent 7-cyano-7-deazaguanine reductase (153 aa).

The Thioimide intermediate role is filled by Cys51. The active-site Proton donor is the Asp58. Substrate-binding positions include 73–75 (VES) and 92–93 (HE).

Belongs to the GTP cyclohydrolase I family. QueF type 1 subfamily.

The protein localises to the cytoplasm. The catalysed reaction is 7-aminomethyl-7-carbaguanine + 2 NADP(+) = 7-cyano-7-deazaguanine + 2 NADPH + 3 H(+). Its pathway is tRNA modification; tRNA-queuosine biosynthesis. Catalyzes the NADPH-dependent reduction of 7-cyano-7-deazaguanine (preQ0) to 7-aminomethyl-7-deazaguanine (preQ1). This is NADPH-dependent 7-cyano-7-deazaguanine reductase from Granulibacter bethesdensis (strain ATCC BAA-1260 / CGDNIH1).